Consider the following 271-residue polypeptide: Insulin-like growth factor-binding protein 5 (271 aa).

An N-terminal signal peptide occupies residues Met-1–Gly-19. Residues Ser-22–Glu-102 enclose the IGFBP N-terminal domain. Disulfide bonds link Cys-26–Cys-52, Cys-29–Cys-54, Cys-37–Cys-55, Cys-44–Cys-58, Cys-66–Cys-79, and Cys-73–Cys-99. Residues Ala-109–Pro-121 are compositionally biased toward basic and acidic residues. The disordered stretch occupies residues Ala-109 to Glu-129. Ser-115 is subject to Phosphoserine. Residues Gln-188 to Cys-262 form the Thyroglobulin type-1 domain. 3 disulfides stabilise this stretch: Cys-191–Cys-218, Cys-229–Cys-240, and Cys-242–Cys-262.

Interacts with IGF1; this interaction enhances the growth stimulatory effects of IGF1 on fibroblasts. Interacts with CAV1; this interaction allows trafficking of IGFBP5 from the plasma membrane to the nucleus. Interacts with NCL; this interaction is necessary for IGFBP5 localization to the nucleus.

It is found in the secreted. The protein resides in the cytoplasm. The protein localises to the nucleus. Multifunctional protein that plays a critical role in regulating the availability of IGFs to their receptors and thereby regulates IGF-mediated cellular processes including proliferation, differentiation, and apoptosis in a cell-type specific manner. Increases the cell proliferation of osteoblasts, intestinal smooth muscle cells and neuroblastoma cells. Enhances adhesion and survival of epithelial cells but decreases adhesion of mesenchymal cells. Once secreted, acts as a major mediator of mTORC1-dependent feedback inhibition of IGF1 signaling. Also plays a role in the induction of extracellular matrix (ECM) production and deposition independently of its nuclear translocation and binding to IGFs. Acts itself as a growth factor that can act independently of IGFs to regulate bone formation. Acts as a ligand for the ROR1 receptor which triggers formation of ROR1/HER2 heterodimer to enhance CREB oncogenic signaling. The sequence is that of Insulin-like growth factor-binding protein 5 (IGFBP5) from Bos taurus (Bovine).